The primary structure comprises 465 residues: Ribulose bisphosphate carboxylase large chain (465 aa).

K4 carries the post-translational modification N6,N6,N6-trimethyllysine. The substrate site is built by N113 and T163. K165 functions as the Proton acceptor in the catalytic mechanism. A substrate-binding site is contributed by K167. Mg(2+) is bound by residues K191, D193, and E194. K191 is modified (N6-carboxylysine). H284 functions as the Proton acceptor in the catalytic mechanism. The substrate site is built by R285, H317, and S369.

Belongs to the RuBisCO large chain family. Type I subfamily. As to quaternary structure, heterohexadecamer of 8 large chains and 8 small chains; disulfide-linked. The disulfide link is formed within the large subunit homodimers. Mg(2+) serves as cofactor. In terms of processing, the disulfide bond which can form in the large chain dimeric partners within the hexadecamer appears to be associated with oxidative stress and protein turnover.

It localises to the plastid. Its subcellular location is the chloroplast. It catalyses the reaction 2 (2R)-3-phosphoglycerate + 2 H(+) = D-ribulose 1,5-bisphosphate + CO2 + H2O. The enzyme catalyses D-ribulose 1,5-bisphosphate + O2 = 2-phosphoglycolate + (2R)-3-phosphoglycerate + 2 H(+). In terms of biological role, ruBisCO catalyzes two reactions: the carboxylation of D-ribulose 1,5-bisphosphate, the primary event in carbon dioxide fixation, as well as the oxidative fragmentation of the pentose substrate in the photorespiration process. Both reactions occur simultaneously and in competition at the same active site. In Combretum indicum (Rangoon creeper), this protein is Ribulose bisphosphate carboxylase large chain.